Consider the following 126-residue polypeptide: uncharacterized protein (126 aa).

The segment at 13–45 (VAPKAGREEEQPPPPAGLGCGARGEPGRGPLEH) is disordered.

The protein localises to the cytoplasm. Its subcellular location is the cytoskeleton. The protein resides in the cilium basal body. This is an uncharacterized protein from Homo sapiens (Human).